We begin with the raw amino-acid sequence, 159 residues long: NADH-quinone oxidoreductase subunit I (159 aa).

2 consecutive 4Fe-4S ferredoxin-type domains span residues Arg-51–Asp-80 and Thr-90–Asn-119. Positions 60, 63, 66, 70, 99, 102, 105, and 109 each coordinate [4Fe-4S] cluster.

The protein belongs to the complex I 23 kDa subunit family. As to quaternary structure, NDH-1 is composed of 14 different subunits. Subunits NuoA, H, J, K, L, M, N constitute the membrane sector of the complex. [4Fe-4S] cluster is required as a cofactor.

The protein localises to the cell inner membrane. The enzyme catalyses a quinone + NADH + 5 H(+)(in) = a quinol + NAD(+) + 4 H(+)(out). Functionally, NDH-1 shuttles electrons from NADH, via FMN and iron-sulfur (Fe-S) centers, to quinones in the respiratory chain. The immediate electron acceptor for the enzyme in this species is believed to be ubiquinone. Couples the redox reaction to proton translocation (for every two electrons transferred, four hydrogen ions are translocated across the cytoplasmic membrane), and thus conserves the redox energy in a proton gradient. The chain is NADH-quinone oxidoreductase subunit I from Rickettsia felis (strain ATCC VR-1525 / URRWXCal2) (Rickettsia azadi).